A 137-amino-acid polypeptide reads, in one-letter code: Ribosome-binding factor A (137 aa).

Residues 110–137 (RIQQEKEGATDDRDQNDSGEDATPHSND) are disordered. A compositionally biased stretch (basic and acidic residues) spans 112 to 125 (QQEKEGATDDRDQN).

The protein belongs to the RbfA family. As to quaternary structure, monomer. Binds 30S ribosomal subunits, but not 50S ribosomal subunits or 70S ribosomes.

The protein localises to the cytoplasm. In terms of biological role, one of several proteins that assist in the late maturation steps of the functional core of the 30S ribosomal subunit. Associates with free 30S ribosomal subunits (but not with 30S subunits that are part of 70S ribosomes or polysomes). Required for efficient processing of 16S rRNA. May interact with the 5'-terminal helix region of 16S rRNA. The protein is Ribosome-binding factor A of Rhodopirellula baltica (strain DSM 10527 / NCIMB 13988 / SH1).